The chain runs to 212 residues: Ribosomal RNA small subunit methyltransferase G (212 aa).

S-adenosyl-L-methionine is bound by residues Gly-80, Leu-85, 131–132 (VE), and Arg-146.

The protein belongs to the methyltransferase superfamily. RNA methyltransferase RsmG family.

Its subcellular location is the cytoplasm. It carries out the reaction guanosine(527) in 16S rRNA + S-adenosyl-L-methionine = N(7)-methylguanosine(527) in 16S rRNA + S-adenosyl-L-homocysteine. In terms of biological role, specifically methylates the N7 position of guanine in position 527 of 16S rRNA. The sequence is that of Ribosomal RNA small subunit methyltransferase G from Azoarcus sp. (strain BH72).